The following is a 95-amino-acid chain: MNINEMLKKAKRLQAEMEVEEKEIAKKEFVVKKQGIKVVMLGTRKIKTIEISPALIDPEDPELVQDLVMLAINEAIDIIDEEYDELGDKYSNTSI.

It belongs to the YbaB/EbfC family. Homodimer.

The protein localises to the cytoplasm. The protein resides in the nucleoid. Functionally, binds to DNA and alters its conformation. May be involved in regulation of gene expression, nucleoid organization and DNA protection. The protein is Nucleoid-associated protein MARTH_orf159 of Metamycoplasma arthritidis (strain 158L3-1) (Mycoplasma arthritidis).